Consider the following 450-residue polypeptide: UPF0210 protein CPF_1748 (450 aa).

This sequence belongs to the UPF0210 family. Homodimer.

The sequence is that of UPF0210 protein CPF_1748 from Clostridium perfringens (strain ATCC 13124 / DSM 756 / JCM 1290 / NCIMB 6125 / NCTC 8237 / Type A).